Consider the following 211-residue polypeptide: Protein CHLORORESPIRATORY REDUCTION 41, chloroplastic (211 aa).

Residues 1-38 constitute a chloroplast transit peptide; that stretch reads MASTSTLLLPSLSSKNLHIAVPIRTNSFVRRTTKFSTK. The stretch at 136 to 163 forms a coiled coil; the sequence is AKAGEIVAERAREEAEVLRDEGKVEERM.

In terms of assembly, biogenesis factor component of the plastidial NDH subcomplex A.

Its subcellular location is the plastid. It is found in the chloroplast. It localises to the chloroplast stroma. In terms of biological role, required for both formation and activity of the chloroplast NAD(P)H dehydrogenase (NDH) complex of the photosynthetic electron transport chain. Functions in assembly or stabilization of the NDH complex; probably involved, together with NdhO and NdhH, in the formation of an NDH subcomplex A assembly intermediate (NAI500). The polypeptide is Protein CHLORORESPIRATORY REDUCTION 41, chloroplastic (Arabidopsis thaliana (Mouse-ear cress)).